A 211-amino-acid chain; its full sequence is Troponin I, cardiac muscle (211 aa).

A disordered region spans residues 1–24 (MADESSDAAGEPQPAPAPVRRRSS). N-acetylalanine is present on Ala-2. Ser-5 and Ser-6 each carry phosphoserine. Ser-23 and Ser-24 each carry phosphoserine; by PKA and PKD/PRKD1. Tyr-27 carries the post-translational modification Phosphotyrosine. Position 32 is a phosphothreonine; by STK4/MST1 (Thr-32). The tract at residues 33 to 80 (EPHAKKKSKISASRKLQLKTLMLQIAKQEMEREAEERRGEKGRVLRTR) is involved in binding TNC. Phosphoserine; by PKC/PRKCE is present on residues Ser-43 and Ser-45. Thr-52 bears the Phosphothreonine; by STK4/MST1 mark. Thr-79 bears the Phosphothreonine mark. Residues Thr-130 and Thr-144 each carry the phosphothreonine; by STK4/MST1 modification. An involved in binding TNC and actin region spans residues 130–151 (TQKIYDLRGKFKRPTLRRVRIS). A phosphoserine mark is found at Ser-151, Ser-167, and Ser-200.

Belongs to the troponin I family. In terms of assembly, interacts with TRIM63. Binds to actin and tropomyosin. Interacts with STK4/MST1. Phosphorylated at Ser-23 and Ser-24 by PRKD1; phosphorylation reduces myofilament calcium sensitivity. Phosphorylated preferentially at Thr-32. Phosphorylation by STK4/MST1 alters its binding affinity to TNNC1 (cardiac Tn-C) and TNNT2 (cardiac Tn-T). Phosphorylated at Ser-43 and Ser-45 by PRKCE; phosphorylation increases myocardium contractile dysfunction.

Its function is as follows. Troponin I is the inhibitory subunit of troponin, the thin filament regulatory complex which confers calcium-sensitivity to striated muscle actomyosin ATPase activity. The protein is Troponin I, cardiac muscle (Tnni3) of Mus musculus (Mouse).